A 190-amino-acid polypeptide reads, in one-letter code: Potassium-transporting ATPase KdpC subunit (190 aa).

The chain crosses the membrane as a helical span at residues 10–30; it reads TFLFLLLITGGVYPLLTTALG.

The protein belongs to the KdpC family. As to quaternary structure, the system is composed of three essential subunits: KdpA, KdpB and KdpC.

The protein localises to the cell inner membrane. Functionally, part of the high-affinity ATP-driven potassium transport (or Kdp) system, which catalyzes the hydrolysis of ATP coupled with the electrogenic transport of potassium into the cytoplasm. This subunit acts as a catalytic chaperone that increases the ATP-binding affinity of the ATP-hydrolyzing subunit KdpB by the formation of a transient KdpB/KdpC/ATP ternary complex. The protein is Potassium-transporting ATPase KdpC subunit of Escherichia coli O127:H6 (strain E2348/69 / EPEC).